Here is a 394-residue protein sequence, read N- to C-terminus: Putative nickel insertion protein (394 aa).

The protein belongs to the LarC family.

The chain is Putative nickel insertion protein from Syntrophotalea carbinolica (strain DSM 2380 / NBRC 103641 / GraBd1) (Pelobacter carbinolicus).